A 351-amino-acid polypeptide reads, in one-letter code: Histidinol-phosphate aminotransferase (351 aa).

N6-(pyridoxal phosphate)lysine is present on Lys215.

Belongs to the class-II pyridoxal-phosphate-dependent aminotransferase family. Histidinol-phosphate aminotransferase subfamily. Pyridoxal 5'-phosphate is required as a cofactor.

The enzyme catalyses L-histidinol phosphate + 2-oxoglutarate = 3-(imidazol-4-yl)-2-oxopropyl phosphate + L-glutamate. It functions in the pathway amino-acid biosynthesis; L-histidine biosynthesis; L-histidine from 5-phospho-alpha-D-ribose 1-diphosphate: step 7/9. The sequence is that of Histidinol-phosphate aminotransferase from Methanocorpusculum labreanum (strain ATCC 43576 / DSM 4855 / Z).